Consider the following 152-residue polypeptide: Transcriptional regulator MraZ (152 aa).

2 SpoVT-AbrB domains span residues Ile-7–Glu-54 and Ala-83–Ala-126.

Belongs to the MraZ family. In terms of assembly, forms oligomers.

The protein localises to the cytoplasm. It is found in the nucleoid. The polypeptide is Transcriptional regulator MraZ (Hydrogenovibrio crunogenus (strain DSM 25203 / XCL-2) (Thiomicrospira crunogena)).